The sequence spans 425 residues: Succinyl-diaminopimelate desuccinylase (425 aa).

Position 96 (His96) interacts with Zn(2+). Asp98 is a catalytic residue. Position 129 (Asp129) interacts with Zn(2+). Glu163 acts as the Proton acceptor in catalysis. 3 residues coordinate Zn(2+): Glu164, Glu192, and His378.

It belongs to the peptidase M20A family. DapE subfamily. Homodimer. Zn(2+) is required as a cofactor. Co(2+) serves as cofactor.

It catalyses the reaction N-succinyl-(2S,6S)-2,6-diaminopimelate + H2O = (2S,6S)-2,6-diaminopimelate + succinate. The protein operates within amino-acid biosynthesis; L-lysine biosynthesis via DAP pathway; LL-2,6-diaminopimelate from (S)-tetrahydrodipicolinate (succinylase route): step 3/3. Its function is as follows. Catalyzes the hydrolysis of N-succinyl-L,L-diaminopimelic acid (SDAP), forming succinate and LL-2,6-diaminopimelate (DAP), an intermediate involved in the bacterial biosynthesis of lysine and meso-diaminopimelic acid, an essential component of bacterial cell walls. The protein is Succinyl-diaminopimelate desuccinylase of Polaromonas sp. (strain JS666 / ATCC BAA-500).